The chain runs to 123 residues: MPTIQQLIRNQRQPVENRTKSPALQGCPQRRGVCTRVYTTTPKKPNSALRKVARVRLTSGFEITAYIPGIGHNSQEHSVVLVRGGRVKDLPGVRYHIVRGTLDAVGVKNRQQGRSKYGVKKPK.

This sequence belongs to the universal ribosomal protein uS12 family. Part of the 30S ribosomal subunit.

The protein localises to the plastid. The protein resides in the chloroplast. Functionally, with S4 and S5 plays an important role in translational accuracy. Located at the interface of the 30S and 50S subunits. The polypeptide is Small ribosomal subunit protein uS12c (rps12) (Huperzia lucidula (Shining clubmoss)).